The primary structure comprises 177 residues: Large ribosomal subunit protein uL6 (177 aa).

This sequence belongs to the universal ribosomal protein uL6 family. Part of the 50S ribosomal subunit.

Its function is as follows. This protein binds to the 23S rRNA, and is important in its secondary structure. It is located near the subunit interface in the base of the L7/L12 stalk, and near the tRNA binding site of the peptidyltransferase center. The polypeptide is Large ribosomal subunit protein uL6 (Methanococcoides burtonii (strain DSM 6242 / NBRC 107633 / OCM 468 / ACE-M)).